Here is a 339-residue protein sequence, read N- to C-terminus: Non-homologous end joining protein Ku (339 aa).

One can recognise a Ku domain in the interval 10–187; the sequence is ITFGLVNIPV…LPKATTGKPT (178 aa). Disordered stretches follow at residues 230–251 and 263–339; these read DSGKTHQLTPPAEEEEAPRQGA and SLGQ…KHAA. Over residues 267-277 the composition is skewed to basic and acidic residues; that stretch reads RGKEDKEDATP. The segment covering 278–289 has biased composition (basic residues); the sequence is ARRKAPARHAAA. A compositionally biased stretch (low complexity) spans 290–310; sequence RKQPAAKRAATPPAKRASTAA.

It belongs to the prokaryotic Ku family. In terms of assembly, homodimer. Interacts with LigD.

Its function is as follows. With LigD forms a non-homologous end joining (NHEJ) DNA repair enzyme, which repairs dsDNA breaks with reduced fidelity. Binds linear dsDNA with 5'- and 3'- overhangs but not closed circular dsDNA nor ssDNA. Recruits and stimulates the ligase activity of LigD. In Cupriavidus necator (strain ATCC 17699 / DSM 428 / KCTC 22496 / NCIMB 10442 / H16 / Stanier 337) (Ralstonia eutropha), this protein is Non-homologous end joining protein Ku.